The primary structure comprises 127 residues: UPF0325 protein VS_2356 (127 aa).

It belongs to the UPF0325 family.

The protein is UPF0325 protein VS_2356 of Vibrio atlanticus (strain LGP32) (Vibrio splendidus (strain Mel32)).